Here is a 520-residue protein sequence, read N- to C-terminus: Biotinidase (520 aa).

The signal sequence occupies residues Met1 to Gly21. The CN hydrolase domain maps to Asn49–Pro333. Glu89 acts as the Proton acceptor in catalysis. N-linked (GlcNAc...) asparagine glycosylation is found at Asn96, Asn127, and Asn180. Residue Lys189 is the Proton donor of the active site. The active-site Nucleophile is Cys222. Residues Asn326, Asn379, and Asn466 are each glycosylated (N-linked (GlcNAc...) asparagine).

The protein belongs to the carbon-nitrogen hydrolase superfamily. BTD/VNN family.

The protein resides in the secreted. The protein localises to the extracellular space. It catalyses the reaction biocytin + H2O = biotin + L-lysine. The enzyme catalyses biotin amide + H2O = biotin + NH4(+). Its function is as follows. Catalytic release of biotin from biocytin, the product of biotin-dependent carboxylases degradation. In Mus musculus (Mouse), this protein is Biotinidase (Btd).